We begin with the raw amino-acid sequence, 483 residues long: Glutamyl-tRNA(Gln) amidotransferase subunit A (483 aa).

Catalysis depends on charge relay system residues K77 and S152. S176 serves as the catalytic Acyl-ester intermediate.

Belongs to the amidase family. GatA subfamily. Heterotrimer of A, B and C subunits.

The catalysed reaction is L-glutamyl-tRNA(Gln) + L-glutamine + ATP + H2O = L-glutaminyl-tRNA(Gln) + L-glutamate + ADP + phosphate + H(+). Its function is as follows. Allows the formation of correctly charged Gln-tRNA(Gln) through the transamidation of misacylated Glu-tRNA(Gln) in organisms which lack glutaminyl-tRNA synthetase. The reaction takes place in the presence of glutamine and ATP through an activated gamma-phospho-Glu-tRNA(Gln). This Listeria monocytogenes serotype 4b (strain F2365) protein is Glutamyl-tRNA(Gln) amidotransferase subunit A.